A 301-amino-acid polypeptide reads, in one-letter code: Inactive C-alpha-formylglycine-generating enzyme 2 (301 aa).

The signal sequence occupies residues 1–25 (MGISLSPLLTVLSLLSGRWLELGNG). Cysteine 156 and cysteine 290 are joined by a disulfide. A glycan (N-linked (GlcNAc...) asparagine) is linked at asparagine 191. The Ca(2+) site is built by asparagine 194, leucine 195, aspartate 208, phenylalanine 210, aspartate 229, glycine 232, valine 234, and glutamate 236. Residues 274-284 (RMGNTPDSASD) show a composition bias toward polar residues. The segment at 274–301 (RMGNTPDSASDNLGFRCASGAGRPPGEL) is disordered. Residues 298–301 (PGEL) carry the Non-canonical ER retention motif motif.

This sequence belongs to the sulfatase-modifying factor family. As to quaternary structure, homodimer and heterodimer with SUMF1.

The protein resides in the endoplasmic reticulum lumen. Lacks formylglycine generating activity and is unable to convert newly synthesized inactive sulfatases to their active form. Inhibits the activation of sulfatases by SUMF1. The chain is Inactive C-alpha-formylglycine-generating enzyme 2 from Bos taurus (Bovine).